Reading from the N-terminus, the 339-residue chain is Putative zinc metalloprotease FN1322 (339 aa).

Histidine 17 lines the Zn(2+) pocket. Residue glutamate 18 is part of the active site. Histidine 21 contacts Zn(2+). The next 3 helical transmembrane spans lie at 88–110 (FIVL…FVTA), 262–284 (FGWI…LNLL), and 318–335 (GMIL…NDVW). One can recognise a PDZ domain in the interval 96–179 (FMNFLMAFIL…ITALVERNGK (84 aa)).

It belongs to the peptidase M50B family. Zn(2+) is required as a cofactor.

The protein localises to the cell membrane. The polypeptide is Putative zinc metalloprotease FN1322 (Fusobacterium nucleatum subsp. nucleatum (strain ATCC 25586 / DSM 15643 / BCRC 10681 / CIP 101130 / JCM 8532 / KCTC 2640 / LMG 13131 / VPI 4355)).